Consider the following 535-residue polypeptide: Cytochrome P450 71C3 (535 aa).

The helical transmembrane segment at 23–43 threads the bilayer; the sequence is QTLTLLLIAVPTVLLLLASLA. Cysteine 475 contributes to the heme binding site.

It belongs to the cytochrome P450 family. Requires heme as cofactor.

The protein localises to the membrane. Its pathway is secondary metabolite biosynthesis; 2,4-dihydroxy-1,4-benzoxazin-3-one biosynthesis; 2,4-dihydroxy-1,4-benzoxazin-3-one from indoleglycerol phosphate: step 5/5. In terms of biological role, catalyzes the conversion of 2-hydroxy-1,4-benzoxazin-3-one (HBOA) to 2,4-dihydroxy-1,4-benzoxazin-3-one (DIBOA). In Zea mays (Maize), this protein is Cytochrome P450 71C3 (CYP71C3).